The chain runs to 142 residues: Sorting nexin-3 (142 aa).

A PX domain is found at 21-138 (NFLEIEVRNP…AAFVQDPNWD (118 aa)). Arg-64, Ser-66, Lys-90, Arg-95, and Arg-104 together coordinate a 1,2-diacyl-sn-glycero-3-phospho-(1D-myo-inositol-3-phosphate).

Belongs to the sorting nexin family.

The protein resides in the cytoplasm. It is found in the golgi apparatus membrane. The protein localises to the prevacuolar compartment membrane. Required for retention of late Golgi membrane proteins. Component of the retrieval machinery that functions by direct interaction with the cytosolic tails of certain TGN membrane proteins during the sorting/budding process at the prevacuolar compartment. Binds phosphatidylinositol 3-phosphate (PtdIns(P3)). This chain is Sorting nexin-3 (snx-3), found in Neurospora crassa (strain ATCC 24698 / 74-OR23-1A / CBS 708.71 / DSM 1257 / FGSC 987).